Reading from the N-terminus, the 101-residue chain is Small ribosomal subunit protein uS14 (101 aa).

The disordered stretch occupies residues 46-72 (FELNRQPRDASPVRVRNRDSRDGRPRG). Basic and acidic residues predominate over residues 61–70 (RNRDSRDGRP).

This sequence belongs to the universal ribosomal protein uS14 family. Part of the 30S ribosomal subunit. Contacts proteins S3 and S10.

Binds 16S rRNA, required for the assembly of 30S particles and may also be responsible for determining the conformation of the 16S rRNA at the A site. This Corynebacterium diphtheriae (strain ATCC 700971 / NCTC 13129 / Biotype gravis) protein is Small ribosomal subunit protein uS14.